Consider the following 309-residue polypeptide: MNRLQVELPGLSLKNPIIPASGCFGFGREYAQFYDLSVLGSIMIKATTEQPRYGNPTPRVAETPGGMLNAIGLQNPGLEKVMNSELPWLEQFDLPIIANVAGSQAEDYVAVAKEISKAPNVHALELNISCPNVKTGGIAFGTNPEIAADLTKRVKEVSEVPVYVKLSPNVANIVEIAKAIANAGADGLTMINTLLGMRLDLKTAKPILANRTGGLSGPAIKPVAIRMVHEVSQAVNIPIIGMGGIETAEDVIEFFYAGASAVAVGTANFIDPFVCPTIIEELPALLDELGFDHISECQGRSWKQTCHSR.

FMN contacts are provided by residues S21 and 45–46; that span reads KA. Substrate contacts are provided by residues K45 and 69–73; that span reads NAIGL. FMN-binding residues include N99 and N127. A substrate-binding site is contributed by N127. Catalysis depends on C130, which acts as the Nucleophile. Residues K165 and I191 each contribute to the FMN site. 192–193 provides a ligand contact to substrate; the sequence is NT. FMN contacts are provided by residues G217, 243–244, and 265–266; these read GG and GT.

This sequence belongs to the dihydroorotate dehydrogenase family. Type 1 subfamily. As to quaternary structure, heterotetramer of 2 PyrK and 2 PyrD type B subunits. It depends on FMN as a cofactor.

It localises to the cytoplasm. The enzyme catalyses (S)-dihydroorotate + NAD(+) = orotate + NADH + H(+). It participates in pyrimidine metabolism; UMP biosynthesis via de novo pathway; orotate from (S)-dihydroorotate (NAD(+) route): step 1/1. In terms of biological role, catalyzes the conversion of dihydroorotate to orotate with NAD(+) as electron acceptor. This Bacillus thuringiensis (strain Al Hakam) protein is Dihydroorotate dehydrogenase B (NAD(+)), catalytic subunit (pyrD).